Reading from the N-terminus, the 266-residue chain is Segregation and condensation protein A (266 aa).

Belongs to the ScpA family. Component of a cohesin-like complex composed of ScpA, ScpB and the Smc homodimer, in which ScpA and ScpB bind to the head domain of Smc. The presence of the three proteins is required for the association of the complex with DNA.

The protein resides in the cytoplasm. Its function is as follows. Participates in chromosomal partition during cell division. May act via the formation of a condensin-like complex containing Smc and ScpB that pull DNA away from mid-cell into both cell halves. This Coxiella burnetii (strain RSA 493 / Nine Mile phase I) protein is Segregation and condensation protein A.